The primary structure comprises 417 residues: Calreticulin (417 aa).

A signal peptide spans 1-17 (MLLSVPLLLGLLGLAVA). Residues 18–197 (EPAVYFKEQF…NSQVESGSLE (180 aa)) are N-domain. Gln26 provides a ligand contact to Ca(2+). At Lys48 the chain carries N6-acetyllysine. Ca(2+)-binding residues include Lys62 and Lys64. Position 64 is an N6-(2-hydroxyisobutyryl)lysine (Lys64). An intrachain disulfide couples Cys105 to Cys137. Tyr109, Lys111, Tyr128, and Asp135 together coordinate an alpha-D-glucoside. Lys159 is subject to N6-acetyllysine. The 1-1 repeat unit spans residues 191 to 202 (VESGSLEDDWDF). The interval 191–255 (VESGSLEDDW…DAKKPEDWDE (65 aa)) is 4 X approximate repeats. The segment at 193-278 (SGSLEDDWDF…PEYKGEWKPR (86 aa)) is disordered. Residues 198–308 (DDWDFLPPKK…YSPDPSIYAY (111 aa)) are P-domain. The span at 207–251 (KIKDPDASKPEDWDERAKIDDPTDSKPEDWDKPEHIPDPDAKKPE) shows a compositional bias: basic and acidic residues. Lys209 is subject to N6-acetyllysine. 6 repeat units span residues 210 to 221 (DPDASKPEDWDE), 227 to 238 (DPTDSKPEDWDK), 244 to 255 (DPDAKKPEDWDE), 259 to 269 (GEWEPPVIQNP), 273 to 283 (GEWKPRQIDNP), and 287 to 297 (GTWIHPEIDNP). The tract at residues 237–270 (DKPEHIPDPDAKKPEDWDEEMDGEWEPPVIQNPE) is interaction with PPIB. Residues 252–261 (DWDEEMDGEW) are compositionally biased toward acidic residues. Residues 259 to 297 (GEWEPPVIQNPEYKGEWKPRQIDNPDYKGTWIHPEIDNP) are 3 X approximate repeats. The segment at 309-417 (DNFGVLGLDL…DVPGQAKDEL (109 aa)) is C-domain. An an alpha-D-glucoside-binding site is contributed by Asp317. Residue Asp328 participates in Ca(2+) binding. Asn344 carries N-linked (GlcNAc...) asparagine glycosylation. Positions 350–417 (TKAAEKQMKD…DVPGQAKDEL (68 aa)) are disordered. Residues 352–379 (AAEKQMKDKQDEEQRLKEEEEDKKRKEE) show a composition bias toward basic and acidic residues. Positions 380–409 (EEAEDKEDDEDKDEDEEDEEDKEEDEEEDV) are enriched in acidic residues. The Prevents secretion from ER signature appears at 414-417 (KDEL).

Belongs to the calreticulin family. In terms of assembly, monomer. Component of an EIF2 complex at least composed of CELF1/CUGBP1, CALR, CALR3, EIF2S1, EIF2S2, HSP90B1 and HSPA5. Interacts with PDIA3/ERp57 and SPACA9. Interacts with TRIM21. Interacts with NR3C1. Interacts with PPIB. Interacts (via P-domain) with PDIA5. Interacts with GABARAP. Interacts with HLA-E-B2M and HLA-G-B2M complexes. Interacts with HLA-F. Interacts with CLCC1.

The protein resides in the endoplasmic reticulum lumen. It localises to the cytoplasm. The protein localises to the cytosol. Its subcellular location is the secreted. It is found in the extracellular space. The protein resides in the extracellular matrix. It localises to the cell surface. The protein localises to the sarcoplasmic reticulum lumen. Its subcellular location is the cytoplasmic vesicle. It is found in the secretory vesicle. The protein resides in the cortical granule. It localises to the cytolytic granule. In terms of biological role, calcium-binding chaperone that promotes folding, oligomeric assembly and quality control in the endoplasmic reticulum (ER) via the calreticulin/calnexin cycle. This lectin interacts transiently with almost all of the monoglucosylated glycoproteins that are synthesized in the ER. Interacts with the DNA-binding domain of NR3C1 and mediates its nuclear export. Involved in maternal gene expression regulation. May participate in oocyte maturation via the regulation of calcium homeostasis. Present in the cortical granules of non-activated oocytes, is exocytosed during the cortical reaction in response to oocyte activation and might participate in the block to polyspermy. The chain is Calreticulin from Homo sapiens (Human).